We begin with the raw amino-acid sequence, 1379 residues long: DNA-directed RNA polymerase subunit beta (1379 aa).

This sequence belongs to the RNA polymerase beta chain family. As to quaternary structure, the RNAP catalytic core consists of 2 alpha, 1 beta, 1 beta' and 1 omega subunit. When a sigma factor is associated with the core the holoenzyme is formed, which can initiate transcription.

The catalysed reaction is RNA(n) + a ribonucleoside 5'-triphosphate = RNA(n+1) + diphosphate. Functionally, DNA-dependent RNA polymerase catalyzes the transcription of DNA into RNA using the four ribonucleoside triphosphates as substrates. The sequence is that of DNA-directed RNA polymerase subunit beta from Campylobacter fetus subsp. fetus (strain 82-40).